The sequence spans 365 residues: Flagellar P-ring protein (365 aa).

A signal peptide spans 1 to 19 (MIKFLSALILLLVTTAAQA).

This sequence belongs to the FlgI family. In terms of assembly, the basal body constitutes a major portion of the flagellar organelle and consists of four rings (L,P,S, and M) mounted on a central rod.

The protein resides in the periplasm. The protein localises to the bacterial flagellum basal body. Functionally, assembles around the rod to form the L-ring and probably protects the motor/basal body from shearing forces during rotation. This is Flagellar P-ring protein from Shigella dysenteriae serotype 1 (strain Sd197).